The primary structure comprises 304 residues: Large ribosomal subunit protein uL18z (304 aa).

The disordered stretch occupies residues 285–304 (LNALNSSAGADDDDEEEDDE). Residues 294–304 (ADDDDEEEDDE) show a composition bias toward acidic residues.

The protein belongs to the universal ribosomal protein uL18 family. Component of the large ribosomal subunit (LSU).

It is found in the cytoplasm. It localises to the nucleus. Component of the ribosome, a large ribonucleoprotein complex responsible for the synthesis of proteins in the cell. The small ribosomal subunit (SSU) binds messenger RNAs (mRNAs) and translates the encoded message by selecting cognate aminoacyl-transfer RNA (tRNA) molecules. The large subunit (LSU) contains the ribosomal catalytic site termed the peptidyl transferase center (PTC), which catalyzes the formation of peptide bonds, thereby polymerizing the amino acids delivered by tRNAs into a polypeptide chain. The nascent polypeptides leave the ribosome through a tunnel in the LSU and interact with protein factors that function in enzymatic processing, targeting, and the membrane insertion of nascent chains at the exit of the ribosomal tunnel. The protein is Large ribosomal subunit protein uL18z (RPL5A) of Oryza sativa subsp. japonica (Rice).